Here is a 468-residue protein sequence, read N- to C-terminus: Probable xyloglucan galactosyltransferase GT13 (468 aa).

Residues 1–18 (MDKFNPKKEKTVKKRALK) are Cytoplasmic-facing. Residues 19-35 (VLTEISPTPLFSMLFLL) traverse the membrane as a helical; Signal-anchor for type II membrane protein segment. Topologically, residues 36–468 (HISQIATYLS…RVSLFKMTRI (433 aa)) are lumenal. N53, N116, N153, N240, and N412 each carry an N-linked (GlcNAc...) asparagine glycan.

The protein belongs to the glycosyltransferase 47 family. In terms of tissue distribution, expressed in roots, hypocotyls, cotyledons, leaves, stems, petals and carpels.

Its subcellular location is the golgi apparatus membrane. Functionally, functions in xyloglucan synthesis by adding side chains to the xylosylated glucan backbone. Involved in the galactosylation of hemicellulose xyloglucan. This is Probable xyloglucan galactosyltransferase GT13 from Arabidopsis thaliana (Mouse-ear cress).